The sequence spans 151 residues: 3-hydroxyacyl-[acyl-carrier-protein] dehydratase FabZ (151 aa).

The active site involves His-49.

Belongs to the thioester dehydratase family. FabZ subfamily.

The protein localises to the cytoplasm. The catalysed reaction is a (3R)-hydroxyacyl-[ACP] = a (2E)-enoyl-[ACP] + H2O. Its function is as follows. Involved in unsaturated fatty acids biosynthesis. Catalyzes the dehydration of short chain beta-hydroxyacyl-ACPs and long chain saturated and unsaturated beta-hydroxyacyl-ACPs. The protein is 3-hydroxyacyl-[acyl-carrier-protein] dehydratase FabZ of Bordetella bronchiseptica (strain ATCC BAA-588 / NCTC 13252 / RB50) (Alcaligenes bronchisepticus).